A 419-amino-acid polypeptide reads, in one-letter code: Ubiquitin receptor RAD23c (419 aa).

Residues 1-79 (MKIFVKTLKG…IVIMMNKSKP (79 aa)) enclose the Ubiquitin-like domain. Positions 83-118 (AASSASAGTSQAKSIPPSTSQPSISPQTPASVSAPV) are enriched in low complexity. Positions 83–172 (AASSASAGTS…DSAPVGSQGD (90 aa)) are disordered. Pro residues predominate over residues 119-135 (APAPTRPPPPAPTPTPA). Positions 136–146 (PVAATETVTTP) are enriched in low complexity. The 44-residue stretch at 185 to 228 (SNLESTIQQILDMGGGTWDRETVVLALRAAFNNPERAVEYLYTG) folds into the UBA 1 domain. The interval 235 to 282 (VPPVARPPASAGQPANPPAQTQQPAAAPASGPNANPLDLFPQGLPNVG) is disordered. Low complexity predominate over residues 245-270 (AGQPANPPAQTQQPAAAPASGPNANP). An STI1 domain is found at 288–331 (GTLDFLRNSQQFQALRAMVQANPQVLQPMLQELGKQNPNLMRLI). Positions 372 to 413 (THEEREAIERLEAMGFERALVLEVFFACNKNEELAANYLLDH) constitute a UBA 2 domain.

It belongs to the RAD23 family. Interacts with 'Lys-48'-linked polyubiquitin chains via its both UBA domains. Interacts with RPN10 via its ubiquitin-like domain. In terms of tissue distribution, widely expressed in the whole plant.

Its subcellular location is the nucleus. The protein localises to the cytoplasm. In terms of biological role, may be involved in nucleotide excision repair. Binds and presumably selects ubiquitin-conjugates for destruction. Prefers multiubiquitin chains rather than single ubiquitins, with a binding affinity for 'Lys-48'-linked ubiquitin chains. Acts as a ubiquitin receptor that associates with the 26S proteasomal docking subunit RPN10 for the indirect recognition of ubiquitinated substrates of ubiquitin/26S proteasome-mediated proteolysis (UPP). Involved in UV tolerance in hypocotyls, specifically in dark conditions. In Arabidopsis thaliana (Mouse-ear cress), this protein is Ubiquitin receptor RAD23c.